Here is a 498-residue protein sequence, read N- to C-terminus: NAD(P)H-quinone oxidoreductase chain 4, chloroplastic (498 aa).

14 helical membrane passes run 4–24 (LPWL…IPLL), 37–57 (LGIC…QFHL), 87–107 (MGLI…AWPV), 111–131 (VRLF…LFAS), 134–154 (ILLF…LLSM), 167–187 (FLLY…TMGL), 207–227 (IAVE…KLPI), 242–262 (HYST…YGLI), 274–294 (FLFS…ASLI), 305–325 (IAYS…SITD), 331–351 (AILQ…LAGI), 386–406 (LALP…GIVT), 417–437 (IILF…LSML), and 461–481 (IFIS…PNLV).

The protein belongs to the complex I subunit 4 family.

The protein localises to the plastid. Its subcellular location is the chloroplast thylakoid membrane. The catalysed reaction is a plastoquinone + NADH + (n+1) H(+)(in) = a plastoquinol + NAD(+) + n H(+)(out). The enzyme catalyses a plastoquinone + NADPH + (n+1) H(+)(in) = a plastoquinol + NADP(+) + n H(+)(out). The polypeptide is NAD(P)H-quinone oxidoreductase chain 4, chloroplastic (Psilotum nudum (Whisk fern)).